The chain runs to 352 residues: Fc receptor-like A (352 aa).

Positions 1–30 (MKLSCTLTQWALYVCPAVLLATQMLLAASS) are cleaved as a signal peptide. Positions 46-65 (CQAAAEEDEGDEDDGDMTQS) are disordered. Positions 50 to 61 (AEEDEGDEDDGD) are enriched in acidic residues. 2 consecutive Ig-like C2-type domains span residues 80 to 169 (PFHL…EAAS) and 182 to 260 (PVLK…RQIS). Disulfide bonds link Cys-109–Cys-153 and Cys-202–Cys-250. The interval 275 to 310 (KPTASETPPTEALGPLPPPPASSAEQPRFSSPDPHL) is disordered.

Monomer or homodimer; disulfide-linked. Highly expressed in spleen. Expressed in immature B-cell and B-cell lines.

The protein resides in the cytoplasm. In terms of biological role, may be implicated in B-cell differentiation and lymphomagenesis. The protein is Fc receptor-like A (Fcrla) of Mus musculus (Mouse).